Here is a 503-residue protein sequence, read N- to C-terminus: NAD(P)H-quinone oxidoreductase chain 4, chloroplastic (503 aa).

Helical transmembrane passes span 4-24 (FPWLTIIVVFPISAGSSIFFL), 37-57 (ICICLLELLLTTYAFCYHFQL), 87-107 (IGPTLLTGFITTLATLAAWPV), 134-154 (LLLFFIMWELELIPVYLLLSM), 167-187 (FILYTAGGSIFLLMGVPGMGL), 208-228 (ALEIIFYFGFFIAYAVKSPII), 242-262 (HYSTCMLLAGILLKMGAYGLV), 272-292 (AHSIFSPWLMIVGTIQIIYAA), 305-325 (IAYSSVSHMGFTIIGIASITD), 330-350 (GAILQIISHGFIGAALFFLAG), 386-406 (LALPGMSGFFAELVVFFGIIT), 416-436 (ILITFVMAIGMILTPIYSLSM), and 462-482 (LFVSICIFLPVIGIGIYPDFV).

The protein belongs to the complex I subunit 4 family.

The protein localises to the plastid. It is found in the chloroplast thylakoid membrane. It carries out the reaction a plastoquinone + NADH + (n+1) H(+)(in) = a plastoquinol + NAD(+) + n H(+)(out). It catalyses the reaction a plastoquinone + NADPH + (n+1) H(+)(in) = a plastoquinol + NADP(+) + n H(+)(out). This chain is NAD(P)H-quinone oxidoreductase chain 4, chloroplastic, found in Drimys granadensis.